Consider the following 358-residue polypeptide: Methylthioribose-1-phosphate isomerase (358 aa).

Substrate-binding positions include 54 to 56, R96, and Q205; that span reads RGA. The active-site Proton donor is the D246. 256–257 contributes to the substrate binding site; the sequence is NK.

The protein belongs to the eIF-2B alpha/beta/delta subunits family. MtnA subfamily.

It catalyses the reaction 5-(methylsulfanyl)-alpha-D-ribose 1-phosphate = 5-(methylsulfanyl)-D-ribulose 1-phosphate. The protein operates within amino-acid biosynthesis; L-methionine biosynthesis via salvage pathway; L-methionine from S-methyl-5-thio-alpha-D-ribose 1-phosphate: step 1/6. Functionally, catalyzes the interconversion of methylthioribose-1-phosphate (MTR-1-P) into methylthioribulose-1-phosphate (MTRu-1-P). The chain is Methylthioribose-1-phosphate isomerase from Pseudomonas aeruginosa (strain UCBPP-PA14).